Here is a 727-residue protein sequence, read N- to C-terminus: Protein EXECUTER 1, chloroplastic (727 aa).

Disordered stretches follow at residues 1–51 (MAAA…SRLF), 65–102 (LAGAAPAPAPRRRVSSVVRCGGGGGGVRSPDDADAGSG), 340–381 (ISSS…LPSD), and 413–455 (DEDD…SGDE). A chloroplast-targeting transit peptide spans 1 to 83 (MAAAVSTAPR…PRRRVSSVVR (83 aa)). Composition is skewed to low complexity over residues 19–33 (SSSCCSSSSSSASMS) and 42–51 (PSSGSGSRLF). Over residues 413–441 (DEDDENDNPEDEIESSEDIGDGDNVEEAE) the composition is skewed to acidic residues.

It localises to the plastid. Its subcellular location is the chloroplast. Its function is as follows. Together with EX2, enables higher plants to perceive singlet oxygen as a stress signal in plastid that activates a genetically determined nuclear stress response program which triggers a programmed cell death (PCD). This transfer of singlet oxygen-induced stress-related signals from the plastid to the nucleus that triggers genetically controlled PCD pathway is unique to photosynthetic eukaryotes and operates under mild stress conditions, impeding photosystem II (PSII) without causing photooxidative damage of the plant. In Oryza sativa subsp. japonica (Rice), this protein is Protein EXECUTER 1, chloroplastic.